Here is a 202-residue protein sequence, read N- to C-terminus: NADH-quinone oxidoreductase subunit B (202 aa).

Polar residues predominate over residues 1–13 (MSSPTTKFSNAAS). Residues 1-32 (MSSPTTKFSNAASSAGGPRVTPAAASILDPRT) form a disordered region. The [4Fe-4S] cluster site is built by C81, C82, C146, and C176.

It belongs to the complex I 20 kDa subunit family. As to quaternary structure, NDH-1 is composed of 14 different subunits. Subunits NuoB, C, D, E, F, and G constitute the peripheral sector of the complex. Requires [4Fe-4S] cluster as cofactor.

Its subcellular location is the cell inner membrane. It catalyses the reaction a quinone + NADH + 5 H(+)(in) = a quinol + NAD(+) + 4 H(+)(out). NDH-1 shuttles electrons from NADH, via FMN and iron-sulfur (Fe-S) centers, to quinones in the respiratory chain. The immediate electron acceptor for the enzyme in this species is believed to be ubiquinone. Couples the redox reaction to proton translocation (for every two electrons transferred, four hydrogen ions are translocated across the cytoplasmic membrane), and thus conserves the redox energy in a proton gradient. The sequence is that of NADH-quinone oxidoreductase subunit B from Nitrobacter hamburgensis (strain DSM 10229 / NCIMB 13809 / X14).